The chain runs to 180 residues: Translation initiation factor IF-3 (180 aa).

It belongs to the IF-3 family. As to quaternary structure, monomer.

Its subcellular location is the cytoplasm. Its function is as follows. IF-3 binds to the 30S ribosomal subunit and shifts the equilibrium between 70S ribosomes and their 50S and 30S subunits in favor of the free subunits, thus enhancing the availability of 30S subunits on which protein synthesis initiation begins. This Klebsiella pneumoniae protein is Translation initiation factor IF-3.